The chain runs to 636 residues: Autophagy-related protein 20 (636 aa).

Disordered stretches follow at residues 1 to 68 and 84 to 163; these read MQIN…QPHE and NYMQ…EGKK. The span at 10 to 23 shows a compositional bias: polar residues; sequence NSVTHLENNSPSRL. Over residues 27–49 the composition is skewed to basic and acidic residues; sequence KTVEEHKEHEPDLQTQSEMRRES. Polar residues predominate over residues 50–64; that stretch reads NGSPKDTAVTNQNGD. Residues 122-133 are compositionally biased toward basic residues; it reads NRRKNSKERRRS. One can recognise a PX domain in the interval 160–305; sequence EGKKRAQILE…DFLDPNNKNW (146 aa). A 1,2-diacyl-sn-glycero-3-phospho-(1D-myo-inositol-3-phosphate) is bound by residues Arg196, Ser198, Lys222, and Arg271.

Belongs to the sorting nexin family.

Its subcellular location is the endosome membrane. It localises to the preautophagosomal structure membrane. In terms of biological role, required for cytoplasm to vacuole transport (Cvt), pexophagy and mitophagy. Also involved in endoplasmic reticulum-specific autophagic process and is essential for the survival of cells subjected to severe ER stress. Functions in protein retrieval from the endocytic pathway. The protein is Autophagy-related protein 20 (ATG20) of Kluyveromyces lactis (strain ATCC 8585 / CBS 2359 / DSM 70799 / NBRC 1267 / NRRL Y-1140 / WM37) (Yeast).